The chain runs to 158 residues: COP9 signalosome complex subunit 9 (158 aa).

The 115-residue stretch at 5 to 119 (LLRNLIEDKT…SVARRATVLE (115 aa)) folds into the PCI domain.

As to quaternary structure, component of a COP9 signalosome-like (CSN) complex.

Its subcellular location is the cytoplasm. The protein localises to the nucleus. Its function is as follows. Component of the COP9 signalosome (CSN) complex that acts as a regulator of the ubiquitin (Ubl) conjugation pathway by mediating the deneddylation of the cullin subunit of SCF-type E3 ubiquitin-protein ligase complexes. The complex is involved in the regulation of the mating pheromone response. This chain is COP9 signalosome complex subunit 9 (CSN9), found in Kluyveromyces lactis (strain ATCC 8585 / CBS 2359 / DSM 70799 / NBRC 1267 / NRRL Y-1140 / WM37) (Yeast).